A 170-amino-acid chain; its full sequence is NADH-dependent flavin reductase StyB (170 aa).

This sequence belongs to the non-flavoprotein flavin reductase family. In terms of assembly, homodimer.

It catalyses the reaction a reduced flavin + NAD(+) = an oxidized flavin + NADH + 2 H(+). It participates in aromatic compound metabolism. Its function is as follows. Reductase component of a two-component system that catalyzes the first step in the aerobic styrene degradation pathway by enantioselective epoxidation of the vinyl side chain. Utilizes NADH to reduce FAD, which is then transferred to the styrene monooxygenase StyA. This chain is NADH-dependent flavin reductase StyB (styB), found in Pseudomonas fluorescens.